Reading from the N-terminus, the 85-residue chain is Large ribosomal subunit protein bL27 (85 aa).

Positions 1-23 (MAHKKAGGSSRNGRDSESKRLGV) are disordered.

It belongs to the bacterial ribosomal protein bL27 family.

The sequence is that of Large ribosomal subunit protein bL27 from Nitrosococcus oceani (strain ATCC 19707 / BCRC 17464 / JCM 30415 / NCIMB 11848 / C-107).